Consider the following 85-residue polypeptide: UPF0181 protein YPO1774/y2534/YP_1619 (85 aa).

The disordered stretch occupies residues 50–85; sequence QAMAIFEDHDFDEHTESDYRRDDEPDADDIEDPYEG. A compositionally biased stretch (basic and acidic residues) spans 55-72; that stretch reads FEDHDFDEHTESDYRRDD. Residues 73 to 85 show a composition bias toward acidic residues; sequence EPDADDIEDPYEG.

It belongs to the UPF0181 family.

This chain is UPF0181 protein YPO1774/y2534/YP_1619, found in Yersinia pestis.